Here is a 1034-residue protein sequence, read N- to C-terminus: Potassium-transporting ATPase alpha chain 1 (1034 aa).

Residues 1–97 (MGKAENYELY…NALRPPRGTP (97 aa)) lie on the Cytoplasmic side of the membrane. Tyr7 and Tyr10 each carry phosphotyrosine. The tract at residues 14-41 (LGSGPGGDMTAKMSKKKAGGGGGKKKEK) is disordered. A compositionally biased stretch (basic residues) spans 26–39 (MSKKKAGGGGGKKK). Ser27 bears the Phosphoserine mark. Residues 98 to 118 (EYVKFARQLAGGLQCLMWVAA) form a helical membrane-spanning segment. At 119–141 (AICLIAFAIQASEGDLTTDDNLY) the chain is on the lumenal side. The chain crosses the membrane as a helical span at residues 142-162 (LAVALIAVVVVTGCFGYYQEF). The Cytoplasmic segment spans residues 163–298 (KSTNIIASFK…NEKTPIAIEI (136 aa)). The helical transmembrane segment at 299 to 318 (EHFVDIIAGLAILFGATFFV) threads the bilayer. Over 319-330 (VAMCIGYTFLRA) the chain is Lumenal. The chain crosses the membrane as a helical span at residues 331–348 (MVFFMAIVVAYVPEGLLA). Residues Val339, Ala340, Val342, and Glu344 each coordinate K(+). Residues 349-782 (TVTVCLSLTA…EQGRLIFDNL (434 aa)) lie on the Cytoplasmic side of the membrane. Asp386 functions as the 4-aspartylphosphate intermediate in the catalytic mechanism. Residues Asp386 and Thr388 each contribute to the Mg(2+) site. 2 positions are modified to phosphoserine: Ser462 and Ser600. Residues Asp727 and Asp731 each coordinate Mg(2+). Residues 783 to 802 (KKSIAYTLTKNIPELTPYLI) traverse the membrane as a helical segment. Glu796 is a binding site for K(+). The Lumenal segment spans residues 803–812 (YITVSVPLPL). The chain crosses the membrane as a helical span at residues 813–833 (GCITILFIELCTDIFPSVSLA). A K(+)-binding site is contributed by Glu821. Topologically, residues 834–853 (YEKAESDIMHLRPRNPKRDR) are cytoplasmic. At Ser839 the chain carries Phosphoserine. Residues 854 to 876 (LVNEPLAAYSYFQIGAIQSFAGF) traverse the membrane as a helical segment. Residues 877-928 (ADYFTAMAQEGWFPLLCVGLRPQWEDHHLQDLQDSYGQEWTFGQRLYQQYTC) are Lumenal-facing. A helical transmembrane segment spans residues 929–948 (YTVFFISIEMCQIADVLIRK). Residues 949-962 (TRRLSVFQQGFFRN) lie on the Cytoplasmic side of the membrane. Phosphoserine; by PKA is present on Ser953. A helical membrane pass occupies residues 963-981 (KILVIAIVFQVCIGCFLCY). Residues 982–996 (CPGMPNIFNFMPIRF) lie on the Lumenal side of the membrane. Residues 997–1017 (QWWLVPMPFGLLIFVYDEIRK) form a helical membrane-spanning segment. Over 1018-1034 (LGVRCCPGSWWDQELYY) the chain is Cytoplasmic.

It belongs to the cation transport ATPase (P-type) (TC 3.A.3) family. Type IIC subfamily. The gastric H(+)/K(+) ATPase pump is composed of the catalytic alpha subunit ATP4A and the regulatory beta subunit ATP4B. Interacts (via the P-domain) with ATP4B (via N-terminus); this interaction stabilizes the lumenal-open E2 conformation state and prevents the reverse reaction of the transport cycle. Expressed in parietal cells (at protein level).

The protein resides in the apical cell membrane. It catalyses the reaction K(+)(out) + ATP + H2O + H(+)(in) = K(+)(in) + ADP + phosphate + 2 H(+)(out). Its function is as follows. The catalytic subunit of the gastric H(+)/K(+) ATPase pump which transports H(+) ions in exchange for K(+) ions across the apical membrane of parietal cells. Uses ATP as an energy source to pump H(+) ions to the gastric lumen while transporting K(+) ion from the lumen into the cell. Remarkably generates a million-fold proton gradient across the gastric parietal cell membrane, acidifying the gastric juice down to pH 1. Within a transport cycle, the transfer of a H(+) ion across the membrane is coupled to ATP hydrolysis and is associated with a transient phosphorylation that shifts the pump conformation from inward-facing (E1) to outward-facing state (E2). The release of the H(+) ion in the stomach lumen is followed by binding of K(+) ion converting the pump conformation back to the E1 state. This is Potassium-transporting ATPase alpha chain 1 from Mus musculus (Mouse).